A 598-amino-acid polypeptide reads, in one-letter code: Chromodomain Y-like protein (598 aa).

A disordered region spans residues 1–76 (MTFQASHRSA…VDKRKNKKGK (76 aa)). The span at 44–56 (PSISVSSEQSGAQ) shows a compositional bias: polar residues. The Chromo domain maps to 61–121 (LQVERIVDKR…RHTEKQKEST (61 aa)). The interval 61–309 (LQVERIVDKR…NIQTSVTGVT (249 aa)) is interaction with EZH2. A compositionally biased stretch (basic and acidic residues) spans 65–76 (RIVDKRKNKKGK). The residue at position 88 (S88) is a Phosphoserine. Basic and acidic residues predominate over residues 112-121 (RHTEKQKEST). The tract at residues 112–149 (RHTEKQKESTLTRTNRTSPNNARKQISRSTNSNFSKTS) is disordered. The segment covering 122 to 149 (LTRTNRTSPNNARKQISRSTNSNFSKTS) has biased composition (polar residues). An N6,N6,N6-trimethyllysine; by EHMT2; alternate modification is found at K135. K135 is subject to N6,N6-dimethyllysine; by EHMT2; alternate. K135 bears the N6-methyllysine; by EHMT2; alternate mark. Residues S170, S201, and S216 each carry the phosphoserine modification. The interval 204–226 (KSRTAVDGFQSESPEKLDPVEQG) is disordered. The tract at residues 362 to 594 (SENNSLNPEV…DSMLKYLQRK (233 aa)) is acetyl-CoA-binding domain.

As to quaternary structure, forms multimers and multimerization is required for stable binding to chromatin. Interacts with HDAC1 and HDAC2 via its C-terminal acetyl-CoA-binding domain. Interacts with EZH2, EED, SUZ12, REST, EHMT1 and EHMT2. Part of a complex containing at least CDYL, REST, WIZ, SETB1, EHMT1 and EHMT2. Part of a complex containing at least CDYL, MIER1, MIER2, HDAC1 and HDAC2. Interacts with CHAF1A and CHAF1B; bridging the CAF-1 complex to the MCM2-7 (MCM) complex. Interacts with MCM3 and MCM5; bridging the CAF-1 complex to the MCM2-7 (MCM) complex. Recruited to Xist RNA-coated X chromosome. Interacts with EHMT2 and PRDM9; interaction only takes place when PRDM9 is bound to hotspot DNA. In terms of tissue distribution, expressed in the hippocampus with reduced expression in epileptic tissue compared to normal adjacent tissue (at protein level). Ubiquitous. Expressed at moderate levels in all tissues examined. Isoform 2: Most abundantly expressed isoform.

It is found in the nucleus. Its subcellular location is the chromosome. The catalysed reaction is 3-hydroxybutanoyl-CoA = (2E)-butenoyl-CoA + H2O. Chromatin reader protein that recognizes and binds histone H3 trimethylated at 'Lys-9', dimethylated at 'Lys-27' and trimethylated at 'Lys-27' (H3K9me3, H3K27me2 and H3K27me3, respectively). Part of multimeric repressive chromatin complexes, where it is required for transmission and restoration of repressive histone marks, thereby preserving the epigenetic landscape. Required for chromatin targeting and maximal enzymatic activity of Polycomb repressive complex 2 (PRC2); acts as a positive regulator of PRC2 activity by bridging the pre-existing histone H3K27me3 and newly recruited PRC2 on neighboring nucleosomes. Acts as a corepressor for REST by facilitating histone-lysine N-methyltransferase EHMT2 recruitment and H3K9 dimethylation at REST target genes for repression. Involved in X chromosome inactivation in females: recruited to Xist RNA-coated X chromosome and facilitates propagation of H3K9me2 by anchoring EHMT2. Promotes EZH2 accumulation and H3K27me3 methylation at DNA double strand breaks (DSBs), thereby facilitating transcriptional repression at sites of DNA damage and homology-directed repair of DSBs. Required for neuronal migration during brain development by repressing expression of RHOA. By repressing the expression of SCN8A, contributes to the inhibition of intrinsic neuronal excitability and epileptogenesis. In addition to acting as a chromatin reader, acts as a hydro-lyase. Shows crotonyl-coA hydratase activity by mediating the conversion of crotonyl-CoA ((2E)-butenoyl-CoA) to beta-hydroxybutyryl-CoA (3-hydroxybutanoyl-CoA), thereby acting as a negative regulator of histone crotonylation. Histone crotonylation is required during spermatogenesis; down-regulation of histone crotonylation by CDYL regulates the reactivation of sex chromosome-linked genes in round spermatids and histone replacement in elongating spermatids. By regulating histone crotonylation and trimethylation of H3K27, may be involved in stress-induced depression-like behaviors, possibly by regulating VGF expression. Functionally, not able to recognize and bind histone H3K9me3, histone H3K27me2 and histone H3K27me3, due to the presence of a N-terminal extension that inactivates the chromo domain. In terms of biological role, not able to recognize and bind histone H3K9me3, histone H3K27me2 and histone H3K27me3, due to the absence of the chromo domain. Acts as a negative regulator of isoform 2 by displacing isoform 2 from chromatin. In Homo sapiens (Human), this protein is Chromodomain Y-like protein.